The primary structure comprises 118 residues: LYR motif containing protein 1 (118 aa).

Residues 91–118 (TQKGRKLRAQQRLRKQAKPVYLQSQDET) form a disordered region. Over residues 93–107 (KGRKLRAQQRLRKQA) the composition is skewed to basic residues.

It belongs to the complex I LYR family.

The polypeptide is LYR motif containing protein 1 (lyrm1) (Danio rerio (Zebrafish)).